Reading from the N-terminus, the 154-residue chain is Probable ubiquitin-conjugating enzyme E2 31 (154 aa).

Residues 8–153 (KAAQRIAMEY…AREFTARHAN (146 aa)) enclose the UBC core domain. The Glycyl thioester intermediate role is filled by C91.

The protein belongs to the ubiquitin-conjugating enzyme family.

The catalysed reaction is S-ubiquitinyl-[E1 ubiquitin-activating enzyme]-L-cysteine + [E2 ubiquitin-conjugating enzyme]-L-cysteine = [E1 ubiquitin-activating enzyme]-L-cysteine + S-ubiquitinyl-[E2 ubiquitin-conjugating enzyme]-L-cysteine.. The protein operates within protein modification; protein ubiquitination. Functionally, accepts the ubiquitin from the E1 complex and catalyzes its covalent attachment to other proteins. The protein is Probable ubiquitin-conjugating enzyme E2 31 (UBC31) of Arabidopsis thaliana (Mouse-ear cress).